The following is a 493-amino-acid chain: Transcript termination protein A18 (493 aa).

Residues 100-256 (MIELKRPLYI…NSIINIAKLS (157 aa)) form the Helicase ATP-binding domain. ATP is bound at residue 113–120 (LACGFGKT). Residues 206–209 (DESH) carry the DESH box motif. A Helicase C-terminal domain is found at 309-456 (ILDTLVEEFK…IISLSVDKLG (148 aa)).

The protein belongs to the helicase family. Poxviruses subfamily. In terms of assembly, interacts with G2. Might be part of a transcription complex composed at least of G2, A18, and H5.

It is found in the virion. Functionally, DNA helicase which seems to act as a postreplicative transcription termination factor. Involved in ATP-dependent release of nascent RNA. Forms a stable complex with single-stranded DNA, and to a lesser extent RNA. The polypeptide is Transcript termination protein A18 (Mus musculus (Mouse)).